A 92-amino-acid chain; its full sequence is Small ribosomal subunit protein uS19 (92 aa).

Belongs to the universal ribosomal protein uS19 family.

Protein S19 forms a complex with S13 that binds strongly to the 16S ribosomal RNA. The chain is Small ribosomal subunit protein uS19 from Rippkaea orientalis (strain PCC 8801 / RF-1) (Cyanothece sp. (strain PCC 8801)).